A 35-amino-acid chain; its full sequence is Kappa-theraphotoxin-Tb1b (35 aa).

Disulfide bonds link Cys3/Cys18, Cys10/Cys23, and Cys17/Cys30.

It belongs to the neurotoxin 10 (Hwtx-1) family. 58 subfamily. In terms of assembly, monomer. Expressed by the venom gland.

It is found in the secreted. Functionally, low-affinity blocker of Kv4.2/KCND2 voltage-gated potassium channels. Is presumed to shift the voltage-dependence of channel activation to more depolarized potentials and to bind to the S3-S4 linker region of the voltage sensor domain. The chain is Kappa-theraphotoxin-Tb1b from Theraphosa blondi (Goliath birdeating spider).